Here is a 252-residue protein sequence, read N- to C-terminus: Electron transfer flavoprotein subunit beta (252 aa).

The protein belongs to the ETF beta-subunit/FixA family. Heterodimer of an alpha and a beta subunit. AMP is required as a cofactor.

The protein localises to the cytoplasm. The protein operates within lipid metabolism; butanoate metabolism. Its function is as follows. Part of an electron transfer flavoprotein involved in syntrophic growth of S.wolfei with butyrate. Probably receives electrons from butyryl-CoA dehydrogenases, and transfers them to the membrane-bound quinone oxidoreductase Swol_0698. The polypeptide is Electron transfer flavoprotein subunit beta (Syntrophomonas wolfei subsp. wolfei (strain DSM 2245B / Goettingen)).